Consider the following 173-residue polypeptide: Putative metal-dependent hydrolase BcerKBAB4_2443 (173 aa).

Residues His65, His156, and His160 each coordinate Zn(2+).

The protein belongs to the metal hydrolase YfiT family. In terms of assembly, homodimer. Requires Zn(2+) as cofactor.

It is found in the cytoplasm. Possible metal-dependent hydrolase. The chain is Putative metal-dependent hydrolase BcerKBAB4_2443 from Bacillus mycoides (strain KBAB4) (Bacillus weihenstephanensis).